Consider the following 301-residue polypeptide: Mycothiol acetyltransferase (301 aa).

N-acetyltransferase domains lie at 6 to 151 (EWRQ…ILRD) and 153 to 301 (VSLR…QYGR). 79–81 (LFV) contacts acetyl-CoA. Glu180, Lys219, and Glu235 together coordinate 1D-myo-inositol 2-(L-cysteinylamino)-2-deoxy-alpha-D-glucopyranoside. Residues 239 to 241 (VGV) and 246 to 252 (QGGGLGR) contribute to the acetyl-CoA site. Tyr273 provides a ligand contact to 1D-myo-inositol 2-(L-cysteinylamino)-2-deoxy-alpha-D-glucopyranoside.

Belongs to the acetyltransferase family. MshD subfamily. Monomer.

It catalyses the reaction 1D-myo-inositol 2-(L-cysteinylamino)-2-deoxy-alpha-D-glucopyranoside + acetyl-CoA = mycothiol + CoA + H(+). Catalyzes the transfer of acetyl from acetyl-CoA to desacetylmycothiol (Cys-GlcN-Ins) to form mycothiol. The chain is Mycothiol acetyltransferase from Amycolatopsis mediterranei (strain U-32).